The following is a 225-amino-acid chain: NAD(P)H-quinone oxidoreductase subunit K, chloroplastic (225 aa).

The [4Fe-4S] cluster site is built by Cys43, Cys44, Cys108, and Cys139.

It belongs to the complex I 20 kDa subunit family. In terms of assembly, NDH is composed of at least 16 different subunits, 5 of which are encoded in the nucleus. Requires [4Fe-4S] cluster as cofactor.

Its subcellular location is the plastid. It is found in the chloroplast thylakoid membrane. It carries out the reaction a plastoquinone + NADH + (n+1) H(+)(in) = a plastoquinol + NAD(+) + n H(+)(out). The enzyme catalyses a plastoquinone + NADPH + (n+1) H(+)(in) = a plastoquinol + NADP(+) + n H(+)(out). Its function is as follows. NDH shuttles electrons from NAD(P)H:plastoquinone, via FMN and iron-sulfur (Fe-S) centers, to quinones in the photosynthetic chain and possibly in a chloroplast respiratory chain. The immediate electron acceptor for the enzyme in this species is believed to be plastoquinone. Couples the redox reaction to proton translocation, and thus conserves the redox energy in a proton gradient. The chain is NAD(P)H-quinone oxidoreductase subunit K, chloroplastic from Gossypium barbadense (Sea Island cotton).